Reading from the N-terminus, the 388-residue chain is Na(+)/H(+) antiporter NhaA (388 aa).

Topologically, residues 1–11 (MKHLHRFFSSD) are cytoplasmic. Residues 12 to 31 (ASGGIILIIAAVLAMIMANS) traverse the membrane as a helical segment. Over 32–58 (GATSGWYHDFLETPVQLRVGTLEINKN) the chain is Periplasmic. Residues 59 to 80 (MLLWINDALMAVFFLLVGLEVK) traverse the membrane as a helical segment. Over 81–96 (RELMQGSLASLRQAAF) the chain is Cytoplasmic. Residues 97-116 (PVIAAIGGMIVPALLYLAFN) form a helical membrane-spanning segment. At 117–122 (YADPIT) the chain is on the periplasmic side. A helical transmembrane segment spans residues 123–130 (REGWAIPA). The Cytoplasmic portion of the chain corresponds to 131–154 (ATDIAFALGVLALLGSRVPLALKI). The helical transmembrane segment at 155-176 (FLMALAIIDDLGAIIIIALFYT) threads the bilayer. Over 177-180 (NDLS) the chain is Periplasmic. A helical membrane pass occupies residues 181 to 200 (MASLGVAAVAIAVLVVLNLC). Topologically, residues 201-204 (GVRR) are cytoplasmic. A helical membrane pass occupies residues 205-222 (TGVYILVGVVLWTAVLKS). Position 223 (Gly-223) is a topological domain, periplasmic. Residues 224-236 (VHATLAGVIVGFF) traverse the membrane as a helical segment. Over 237–253 (IPLKEKHGRSPAKRLEH) the chain is Cytoplasmic. A helical membrane pass occupies residues 254-272 (VLHPWVAYLILPLFAFANA). Topologically, residues 273–286 (GVSLQGVTLEGLTS) are periplasmic. Residues 287 to 310 (ILPLGIIAGLLIGKPLGISLFCWL) traverse the membrane as a helical segment. The Cytoplasmic portion of the chain corresponds to 311 to 339 (ALRLKLAHLPEGTTYQQIMAVGILCGIGF). The chain crosses the membrane as a helical span at residues 340–350 (TMSIFIASLAF). Residues 351–357 (GSVDPEL) lie on the Periplasmic side of the membrane. A helical membrane pass occupies residues 358 to 380 (INWAKLGILVGSISSAVIGYSWL). Residues 381-388 (RVRLRPSV) are Cytoplasmic-facing.

This sequence belongs to the NhaA Na(+)/H(+) (TC 2.A.33) antiporter family.

The protein localises to the cell inner membrane. The enzyme catalyses Na(+)(in) + 2 H(+)(out) = Na(+)(out) + 2 H(+)(in). Its function is as follows. Na(+)/H(+) antiporter that extrudes sodium in exchange for external protons. In Escherichia coli O1:K1 / APEC, this protein is Na(+)/H(+) antiporter NhaA.